We begin with the raw amino-acid sequence, 378 residues long: UPF0754 membrane protein BCAH820_0954 (378 aa).

Helical transmembrane passes span 1 to 21 and 357 to 377; these read MNIWLSMLTTTGLGAIIGGFT and YLGALLGGMIGIVQGLLLLFL.

The protein belongs to the UPF0754 family.

It localises to the cell membrane. This is UPF0754 membrane protein BCAH820_0954 from Bacillus cereus (strain AH820).